Here is a 524-residue protein sequence, read N- to C-terminus: Alkaline phosphatase, tissue-nonspecific isozyme (524 aa).

An N-terminal signal peptide occupies residues 1 to 17 (MILPFLVLAIGTCLTNS). Residue aspartate 60 coordinates Mg(2+). Aspartate 60 and serine 110 together coordinate Zn(2+). Catalysis depends on serine 110, which acts as the Phosphoserine intermediate. Serine 110 bears the Phosphoserine mark. Residues cysteine 139 and cysteine 201 are joined by a disulfide bond. Residue asparagine 140 is glycosylated (N-linked (GlcNAc...) asparagine). Position 173 (threonine 173) interacts with Mg(2+). Asparagine 230 carries an N-linked (GlcNAc...) asparagine glycan. Position 235 (glutamate 235) interacts with Ca(2+). Asparagine 271 is a glycosylation site (N-linked (GlcNAc...) asparagine). Ca(2+) is bound by residues phenylalanine 290 and glutamate 291. Asparagine 303 carries an N-linked (GlcNAc...) asparagine glycan. Position 306 (aspartate 306) interacts with Ca(2+). Position 332 (glutamate 332) interacts with Mg(2+). Residues aspartate 337, histidine 341, aspartate 378, and histidine 379 each coordinate Zn(2+). N-linked (GlcNAc...) asparagine glycosylation occurs at asparagine 430. Histidine 454 lines the Zn(2+) pocket. Cysteines 489 and 497 form a disulfide. The GPI-anchor amidated serine moiety is linked to residue serine 501. Residues 502-524 (SASSPSPGALLLPLALFPLRTLF) constitute a propeptide, removed in mature form.

It belongs to the alkaline phosphatase family. As to quaternary structure, homodimer. Mg(2+) is required as a cofactor. Requires Zn(2+) as cofactor. The cofactor is Ca(2+). N-glycosylated.

The protein localises to the cell membrane. It is found in the extracellular vesicle membrane. Its subcellular location is the mitochondrion membrane. The protein resides in the mitochondrion intermembrane space. It catalyses the reaction a phosphate monoester + H2O = an alcohol + phosphate. The enzyme catalyses diphosphate + H2O = 2 phosphate + H(+). The catalysed reaction is pyridoxal 5'-phosphate + H2O = pyridoxal + phosphate. It carries out the reaction phosphoethanolamine + H2O = ethanolamine + phosphate. It catalyses the reaction N-phosphocreatine + H2O = creatine + phosphate. The enzyme catalyses ATP + H2O = ADP + phosphate + H(+). The catalysed reaction is ADP + H2O = AMP + phosphate + H(+). It carries out the reaction AMP + H2O = adenosine + phosphate. Its activity is regulated as follows. Phosphatase activity is specifically inhibited by 5-((5-chloro-2-methoxyphenyl)sulfonamido)nicotinamide (SBI-425). Its function is as follows. Alkaline phosphatase that metabolizes various phosphate compounds and plays a key role in skeletal mineralization and adaptive thermogenesis. Has broad substrate specificity and can hydrolyze a considerable variety of compounds: however, only a few substrates, such as diphosphate (inorganic pyrophosphate; PPi), pyridoxal 5'-phosphate (PLP) and N-phosphocreatine are natural substrates. Plays an essential role in skeletal and dental mineralization via its ability to hydrolyze extracellular diphosphate, a potent mineralization inhibitor, to phosphate: it thereby promotes hydroxyapatite crystal formation and increases inorganic phosphate concentration. Acts in a non-redundant manner with PHOSPHO1 in skeletal mineralization: while PHOSPHO1 mediates the initiation of hydroxyapatite crystallization in the matrix vesicles (MVs), ALPL/TNAP catalyzes the spread of hydroxyapatite crystallization in the extracellular matrix. Also promotes dephosphorylation of osteopontin (SSP1), an inhibitor of hydroxyapatite crystallization in its phosphorylated state; it is however unclear whether ALPL/TNAP mediates SSP1 dephosphorylation via a direct or indirect manner. Catalyzes dephosphorylation of PLP to pyridoxal (PL), the transportable form of vitamin B6, in order to provide a sufficient amount of PLP in the brain, an essential cofactor for enzymes catalyzing the synthesis of diverse neurotransmitters. Additionally, also able to mediate ATP degradation in a stepwise manner to adenosine, thereby regulating the availability of ligands for purinergic receptors. Also capable of dephosphorylating microbial products, such as lipopolysaccharides (LPS) as well as other phosphorylated small-molecules, such as poly-inosine:cytosine (poly I:C). Acts as a key regulator of adaptive thermogenesis as part of the futile creatine cycle: localizes to the mitochondria of thermogenic fat cells and acts by mediating hydrolysis of N-phosphocreatine to initiate a futile cycle of creatine dephosphorylation and phosphorylation. During the futile creatine cycle, creatine and N-phosphocreatine are in a futile cycle, which dissipates the high energy charge of N-phosphocreatine as heat without performing any mechanical or chemical work. The chain is Alkaline phosphatase, tissue-nonspecific isozyme (Alpl) from Rattus norvegicus (Rat).